A 126-amino-acid polypeptide reads, in one-letter code: RutC family protein bbp_334 (126 aa).

It belongs to the RutC family.

This Buchnera aphidicola subsp. Baizongia pistaciae (strain Bp) protein is RutC family protein bbp_334.